The sequence spans 248 residues: uncharacterized protein (248 aa).

The helical transmembrane segment at C104–A122 threads the bilayer.

It localises to the membrane. This is an uncharacterized protein from Escherichia coli (strain K12).